A 238-amino-acid polypeptide reads, in one-letter code: MADTDPGYPRSSIEDDFNYGSCVASASVHIRMAFLRKVYSILSLQVLLTTVTSALFLYFQALRTFVHESPALIVVFALGSLGLIFALTLHRHTHPLNLYLLFAFTLSESLAVAAVVTFYDVYLVLQAFIMTTAVFLGLTAYTLQSKRDFTKFGAGLFAGLWILCLAGFLKLFFYSETMELVLASLGALLFCGFIIYDTHSLMHRLSPEEYVIAAISLYMDIINLFLHLLKFLEAVNKK.

Topologically, residues 1-38 (MADTDPGYPRSSIEDDFNYGSCVASASVHIRMAFLRKV) are cytoplasmic. The helical transmembrane segment at 39 to 59 (YSILSLQVLLTTVTSALFLYF) threads the bilayer. Residues 60–68 (QALRTFVHE) lie on the Lumenal side of the membrane. The helical transmembrane segment at 69–89 (SPALIVVFALGSLGLIFALTL) threads the bilayer. Topologically, residues 90–97 (HRHTHPLN) are cytoplasmic. A helical transmembrane segment spans residues 98–118 (LYLLFAFTLSESLAVAAVVTF). The Lumenal portion of the chain corresponds to 119-120 (YD). Residues 121-141 (VYLVLQAFIMTTAVFLGLTAY) traverse the membrane as a helical segment. Residues 142-151 (TLQSKRDFTK) lie on the Cytoplasmic side of the membrane. A helical membrane pass occupies residues 152 to 172 (FGAGLFAGLWILCLAGFLKLF). Residues 173–175 (FYS) lie on the Lumenal side of the membrane. Residues 176–196 (ETMELVLASLGALLFCGFIIY) form a helical membrane-spanning segment. Topologically, residues 197–208 (DTHSLMHRLSPE) are cytoplasmic. An intramembrane region (helical) is located at residues 209 to 229 (EYVIAAISLYMDIINLFLHLL). Over 230 to 238 (KFLEAVNKK) the chain is Cytoplasmic.

Belongs to the BI1 family. LFG subfamily. As to quaternary structure, interacts with ITPR3.

The protein resides in the golgi apparatus membrane. Functionally, anti-apoptotic protein which can inhibit apoptosis induced by intrinsic and extrinsic apoptotic stimuli. Can modulate both capacitative Ca2+ entry and inositol 1,4,5-trisphosphate (IP3)-mediated Ca2+ release. The sequence is that of Protein lifeguard 4 (Tmbim4) from Mus musculus (Mouse).